A 935-amino-acid polypeptide reads, in one-letter code: Myocardin (935 aa).

The MEF2C-binding motif lies at 12-27 (IRRKFRSVLQLRLQQR). RPEL repeat units lie at residues 18–43 (SVLQ…PPLK), 62–87 (DSLR…QAST), and 106–131 (DDLN…PMDS). The interval 37–73 (GLIPPLKGPTEFHDPRKQLDSAKTEDSLRRKGRNRSD) is disordered. Positions 46 to 73 (TEFHDPRKQLDSAKTEDSLRRKGRNRSD) are enriched in basic and acidic residues. An HDAC5-binding region spans residues 153–201 (FEDDSSRDGLSPDQARSEDPQGSTGSTPDIKSTEAPLDTIQDLTPGSES). A disordered region spans residues 155-283 (DDSSRDGLSP…SPPPMDSAYA (129 aa)). Polar residues-rich tracts occupy residues 172–182 (PQGSTGSTPDI) and 206–216 (AASQPGNQSDP). A compositionally biased stretch (basic residues) spans 244 to 261 (NRHKKPKDPKPKVKKLKY). Residues 287–322 (QQQQLFLQLQILSQQQQQQQQQQQQQQQQQQQQQRF) are a coiled coil. A disordered region spans residues 337–378 (EQMARNPNPSSTPLSNTPLSPVKNSISGQTGVSSLKPGPLPP). Residues 342–357 (NPNPSSTPLSNTPLSP) show a composition bias toward low complexity. Residues 358-369 (VKNSISGQTGVS) show a composition bias toward polar residues. In terms of domain architecture, SAP spans 380–414 (LDDLKVSELRQQLRIRGLPVSGTKTALVDRLRPFQ). Ser454, Ser458, Ser462, and Ser466 each carry phosphoserine; by GSK3-beta. Residues 498–518 (ESLLSSLNGGSGPSEPDGLDS) are disordered. A coiled-coil region spans residues 519–563 (EKDKMLVEKQKVINQLTWKLRQEQRQVEELRMQLQKQKSSCSDQK). The disordered stretch occupies residues 579-605 (SCPFAPQQASGKGQGHSSDSPPPACET). Residues 585-597 (QQASGKGQGHSSD) show a composition bias toward polar residues. 4 positions are modified to phosphoserine; by GSK3-beta: Ser624, Ser628, Ser632, and Ser636. The interval 654 to 731 (NNHYFLASSS…DAVKQQMTRS (78 aa)) is disordered. Positions 660–691 (ASSSGAQRENHGVSSPSSSQGCAQMTGLQSSD) are enriched in polar residues. The span at 695 to 709 (PTFSIPSPTFSKSSS) shows a compositional bias: low complexity. Residues 714 to 935 (ITQPPSYEDA…SPMDLHLQQW (222 aa)) form a required for interaction with and ubiquitination by STUB1 region. Residues Ser812, Ser859, and Ser866 each carry the phosphoserine; by MAPK1 and MAPK3 modification. Thr893 carries the post-translational modification Phosphothreonine; by MAPK1 and MAPK3.

In terms of assembly, homodimer. Interacts with MLLT7/FOXO4. Interacts with SRF, its association does not depend on specific DNA sequences for ternary complex formation. Interacts (via C-terminal) with EP300 (via CREB-binding domain). Interacts with HDAC4 and HDAC5. Interacts with MEF2C. Interacts (via C-terminus) with STUB1/CHIP. Interacts with PURB. In terms of processing, ubiquitinated; by STUB1/CHIP at the C-terminus, leading to its degradation by the proteasome. Phosphorylation by GSK3B is required for STUB1/CHIP-mediated ubiquitination. Post-translationally, phosphorylation negatively regulates transcriptional activity. Phosphorylated; by GSK3B. Expressed in smooth muscle cell-containing tissues. Expressed in the heart. Expressed in the aorta and bladder. Weakly expression in the lung, testis and kidney. Weakly expressed in the stomach. Weakly expressed in the intestine and colon. As to expression, expressed in the heart. In terms of tissue distribution, predominantly expressed in cardiac muscle. Predominantly expressed in smooth muscle cell-rich tissues.

Its subcellular location is the nucleus speckle. Its function is as follows. Smooth muscle cells (SM) and cardiac muscle cells-specific transcriptional factor which uses the canonical single or multiple CArG boxes DNA sequence. Acts as a cofactor of serum response factor (SRF) with the potential to modulate SRF-target genes. Plays a crucial role in cardiogenesis, urinary bladder development, and differentiation of the smooth muscle cell lineage (myogenesis). Positively regulates the transcription of genes involved in vascular smooth muscle contraction. Functionally, positively regulates the activation of smooth muscle cell gene promoter regions. In terms of biological role, positively regulates the activation of smooth muscle cell gene promoter regions. Activation of the MYH6 promoter is enhanced in the presence of MEF2C. In Mus musculus (Mouse), this protein is Myocardin (Myocd).